The following is a 373-amino-acid chain: Transcription factor bHLH87 (373 aa).

The segment at 127 to 227 (SAESENREIT…GGSSNISFQH (101 aa)) is disordered. Over residues 188–218 (PQDDSEKGGFKLIYDENQSKSKKPRTEKERG) the composition is skewed to basic and acidic residues. The 50-residue stretch at 275–324 (ISTDPQTVAARQRRERISEKIRVLQTLVPGGTKMDTASMLDEAANYLKFL) folds into the bHLH domain.

As to quaternary structure, homodimer. As to expression, flowers.

Its subcellular location is the nucleus. This is Transcription factor bHLH87 (BHLH87) from Arabidopsis thaliana (Mouse-ear cress).